Here is a 382-residue protein sequence, read N- to C-terminus: Chaperone protein DnaJ (382 aa).

Residues Asp5–Gly69 enclose the J domain. The CR-type zinc finger occupies Gly137–Arg219. The Zn(2+) site is built by Cys150, Cys153, Cys167, Cys170, Cys193, Cys196, Cys207, and Cys210. CXXCXGXG motif repeat units lie at residues Cys150 to Gly157, Cys167 to Gly174, Cys193 to Gly200, and Cys207 to Gly214. The tract at residues Gln154 to Gln175 is disordered.

It belongs to the DnaJ family. Homodimer. The cofactor is Zn(2+).

The protein resides in the cytoplasm. Participates actively in the response to hyperosmotic and heat shock by preventing the aggregation of stress-denatured proteins and by disaggregating proteins, also in an autonomous, DnaK-independent fashion. Unfolded proteins bind initially to DnaJ; upon interaction with the DnaJ-bound protein, DnaK hydrolyzes its bound ATP, resulting in the formation of a stable complex. GrpE releases ADP from DnaK; ATP binding to DnaK triggers the release of the substrate protein, thus completing the reaction cycle. Several rounds of ATP-dependent interactions between DnaJ, DnaK and GrpE are required for fully efficient folding. Also involved, together with DnaK and GrpE, in the DNA replication of plasmids through activation of initiation proteins. In Geobacillus kaustophilus (strain HTA426), this protein is Chaperone protein DnaJ.